The chain runs to 332 residues: 3-ketodihydrosphingosine reductase (332 aa).

Positions 1-25 (MLLLAAASLVAFVLLLYMVSPLISP) are cleaved as a signal peptide. At 26–269 (KPLALPGAHV…QGNFNSSIGS (244 aa)) the chain is on the cytoplasmic side. NADPH is bound by residues Gly39, Ser41, Ser42, Gly43, Arg64, Lys68, and Asp93. Residues 39–43 (GGSSG) carry the GXSXG motif. The active-site Proton donor is the Ser172. Tyr186 serves as the catalytic Proton acceptor. Positions 186 and 190 each coordinate NADP(+). Catalysis depends on Lys190, which acts as the Lowers pKa of active site Tyr. A helical transmembrane segment spans residues 270 to 290 (DGYMLSSLTCGMAPVTSIMEG). Residues 291–292 (LQ) are Lumenal-facing. A helical transmembrane segment spans residues 293–313 (QVVTMGLFRTIALFYLGSFDS). The Cytoplasmic segment spans residues 314-331 (IVRRCMMQKAKLETVDKT).

Belongs to the short-chain dehydrogenases/reductases (SDR) family.

It is found in the endoplasmic reticulum membrane. It catalyses the reaction sphinganine + NADP(+) = 3-oxosphinganine + NADPH + H(+). It functions in the pathway lipid metabolism; sphingolipid metabolism. Catalyzes the reduction of 3'-oxosphinganine (3-ketodihydrosphingosine/KDS) to sphinganine (dihydrosphingosine/DHS), the second step of de novo sphingolipid biosynthesis. In Bos taurus (Bovine), this protein is 3-ketodihydrosphingosine reductase (KDSR).